The sequence spans 500 residues: Glycogen synthase (500 aa).

Lysine 15 lines the ADP-alpha-D-glucose pocket.

The protein belongs to the glycosyltransferase 1 family. Bacterial/plant glycogen synthase subfamily.

The catalysed reaction is [(1-&gt;4)-alpha-D-glucosyl](n) + ADP-alpha-D-glucose = [(1-&gt;4)-alpha-D-glucosyl](n+1) + ADP + H(+). It participates in glycan biosynthesis; glycogen biosynthesis. Synthesizes alpha-1,4-glucan chains using ADP-glucose. The chain is Glycogen synthase from Protochlamydia amoebophila (strain UWE25).